Reading from the N-terminus, the 445-residue chain is UPF0210 protein SSU05_0296 (445 aa).

It belongs to the UPF0210 family. In terms of assembly, homodimer.

The chain is UPF0210 protein SSU05_0296 from Streptococcus suis (strain 05ZYH33).